Reading from the N-terminus, the 346-residue chain is 4-hydroxy-2-oxohexanoate aldolase (346 aa).

The 253-residue stretch at 7 to 259 (VRITDTSLRD…KTGIDFFDIA (253 aa)) folds into the Pyruvate carboxyltransferase domain. 15–16 (RD) contacts substrate. Asp-16 contributes to the Mn(2+) binding site. His-19 acts as the Proton acceptor in catalysis. 2 residues coordinate substrate: Ser-169 and His-198. Mn(2+) is bound by residues His-198 and His-200. Tyr-289 is a binding site for substrate.

The protein belongs to the 4-hydroxy-2-oxovalerate aldolase family. In terms of assembly, homodimer. Forms a heterotetramer composed of two aldolase (HsaF) and two dehydrogenase (HsaG) subunits. Mn(2+) serves as cofactor.

It catalyses the reaction (S)-4-hydroxy-2-oxohexanoate = propanal + pyruvate. The enzyme catalyses (S)-4-hydroxy-2-oxopentanoate = acetaldehyde + pyruvate. Its function is as follows. Involved in cholesterol degradation. Catalyzes the retro-aldol cleavage of 4-hydroxy-2-oxohexanoate (HOHA) to pyruvate and propanal. Can also catalyze the cleavage of 4-hydroxy-2-oxopentanoate (HOPA) to pyruvate and acetaldehyde. The aldehydes produced by this reaction are directly channeled to the dehydrogenase HsaG. The sequence is that of 4-hydroxy-2-oxohexanoate aldolase from Mycobacterium bovis (strain ATCC BAA-935 / AF2122/97).